The primary structure comprises 37 residues: Large ribosomal subunit protein bL36 (37 aa).

It belongs to the bacterial ribosomal protein bL36 family.

The chain is Large ribosomal subunit protein bL36 from Polaromonas naphthalenivorans (strain CJ2).